Here is a 311-residue protein sequence, read N- to C-terminus: Triacylglycerol lipase (311 aa).

An N-terminal signal peptide occupies residues 1–26 (MKKKSLLPLGLAIGLASLAASPLIQA). In terms of domain architecture, AB hydrolase-1 spans 35–280 (PIVLAHGMLG…DNYRMNHLDE (246 aa)). Position 42 (M42) interacts with substrate. The Nucleophile role is filled by S108. A substrate-binding site is contributed by H109. A disulfide bridge links C209 with C261. D235 provides a ligand contact to Ca(2+). Residues D255 and H277 each act as charge relay system in the active site. 3 residues coordinate Ca(2+): D279, Q283, and L287.

It belongs to the AB hydrolase superfamily. Pseudomonas lipase family. As to quaternary structure, monomer. The cofactor is Ca(2+).

It localises to the secreted. The enzyme catalyses a triacylglycerol + H2O = a diacylglycerol + a fatty acid + H(+). Catalyzes the hydrolysis of triacylglycerol. Also able to catalyze, in anhydrous organic solvents, intramolecular transesterification of omega-hydroxyfatty acid esters to form macrocyclic lactones. This biosynthesis is dependent on the chain length of the substrates, and the formation of monomer lactone is maximum with methyl 18-hydroxyoctadecanoate. With shorter substrates, monomer lactone decreases and the formation of diolide (dimer lactone) increases. The chain is Triacylglycerol lipase from Pseudomonas sp. (strain 109).